The primary structure comprises 420 residues: Argininosuccinate synthase (420 aa).

ATP is bound by residues Ala9–Ser17 and Ala35. L-citrulline is bound by residues Tyr86 and Ser91. Ser114–Asn122 lines the ATP pocket. L-aspartate-binding residues include Thr118, Asn122, and Asp123. Position 122 (Asn122) interacts with L-citrulline. The L-citrulline site is built by Arg126, Ser179, Ser188, Glu273, and Tyr285.

It belongs to the argininosuccinate synthase family. Type 1 subfamily. As to quaternary structure, homotetramer.

It is found in the cytoplasm. It catalyses the reaction L-citrulline + L-aspartate + ATP = 2-(N(omega)-L-arginino)succinate + AMP + diphosphate + H(+). Its pathway is amino-acid biosynthesis; L-arginine biosynthesis; L-arginine from L-ornithine and carbamoyl phosphate: step 2/3. Its function is as follows. Catalyzes the eighth step in arginine biosynthesis. Also has a catabolic function as the first enzyme of citrulline utilization as nitrogen source via arginine and the reactions involved in the arginase pathway. In Saccharomyces cerevisiae (strain ATCC 204508 / S288c) (Baker's yeast), this protein is Argininosuccinate synthase (ARG1).